Consider the following 403-residue polypeptide: Argininosuccinate synthase (403 aa).

ATP-binding positions include A12 to S20 and A39. L-citrulline is bound at residue Y91. G121 contacts ATP. Residues T123, N127, and D128 each coordinate L-aspartate. N127 is an L-citrulline binding site. R131, S180, S189, E265, and Y277 together coordinate L-citrulline.

Belongs to the argininosuccinate synthase family. Type 1 subfamily. Homotetramer.

The protein resides in the cytoplasm. The catalysed reaction is L-citrulline + L-aspartate + ATP = 2-(N(omega)-L-arginino)succinate + AMP + diphosphate + H(+). The protein operates within amino-acid biosynthesis; L-arginine biosynthesis; L-arginine from L-ornithine and carbamoyl phosphate: step 2/3. This chain is Argininosuccinate synthase, found in Buchnera aphidicola subsp. Acyrthosiphon pisum (strain 5A).